We begin with the raw amino-acid sequence, 398 residues long: Phosphoglycerate kinase (398 aa).

Substrate is bound by residues 21–23 (DFN), Arg36, 59–62 (HLGR), Arg119, and Arg157. ATP-binding positions include Lys208, Gly296, Glu327, and 354-357 (GGDS).

The protein belongs to the phosphoglycerate kinase family. As to quaternary structure, monomer.

The protein localises to the cytoplasm. It carries out the reaction (2R)-3-phosphoglycerate + ATP = (2R)-3-phospho-glyceroyl phosphate + ADP. It functions in the pathway carbohydrate degradation; glycolysis; pyruvate from D-glyceraldehyde 3-phosphate: step 2/5. This is Phosphoglycerate kinase from Streptococcus pyogenes serotype M5 (strain Manfredo).